Consider the following 449-residue polypeptide: Tubulin beta-6 chain (449 aa).

8 residues coordinate GTP: Q11, E69, S138, G142, T143, G144, N204, and N226. Position 69 (E69) interacts with Mg(2+). Residues 425-449 (YQDATADDEGEYEEDEDEEEILDHE) form a disordered region. A compositionally biased stretch (acidic residues) spans 429-449 (TADDEGEYEEDEDEEEILDHE).

The protein belongs to the tubulin family. As to quaternary structure, dimer of alpha and beta chains. A typical microtubule is a hollow water-filled tube with an outer diameter of 25 nm and an inner diameter of 15 nM. Alpha-beta heterodimers associate head-to-tail to form protofilaments running lengthwise along the microtubule wall with the beta-tubulin subunit facing the microtubule plus end conferring a structural polarity. Microtubules usually have 13 protofilaments but different protofilament numbers can be found in some organisms and specialized cells. The cofactor is Mg(2+).

Its subcellular location is the cytoplasm. The protein localises to the cytoskeleton. Functionally, tubulin is the major constituent of microtubules, a cylinder consisting of laterally associated linear protofilaments composed of alpha- and beta-tubulin heterodimers. Microtubules grow by the addition of GTP-tubulin dimers to the microtubule end, where a stabilizing cap forms. Below the cap, tubulin dimers are in GDP-bound state, owing to GTPase activity of alpha-tubulin. This is Tubulin beta-6 chain (TUBB6) from Arabidopsis thaliana (Mouse-ear cress).